A 232-amino-acid polypeptide reads, in one-letter code: Large ribosomal subunit protein uL1 (232 aa).

It belongs to the universal ribosomal protein uL1 family. As to quaternary structure, part of the 50S ribosomal subunit.

Functionally, binds directly to 23S rRNA. The L1 stalk is quite mobile in the ribosome, and is involved in E site tRNA release. Its function is as follows. Protein L1 is also a translational repressor protein, it controls the translation of the L11 operon by binding to its mRNA. The polypeptide is Large ribosomal subunit protein uL1 (Bacillus cereus (strain ATCC 14579 / DSM 31 / CCUG 7414 / JCM 2152 / NBRC 15305 / NCIMB 9373 / NCTC 2599 / NRRL B-3711)).